Consider the following 279-residue polypeptide: MILDLDIGNTLSKWRLKDVASSEIRSRGAVWTREEWRPGADIPDLDVVEAVRISSVARASVLRDTVALLRRQVGAVHVARSTPEALGVSCGYEEPARLGVDRWMGVLAGYQLTGGCCSVDCGSAITMDFVLPGGRHLGGYIIPGLRLMKESLKLGTRNVAIDPDSEADELLAPGRNTVEAVNHGIYMSAVSAVNRIYSEVCDREGVALPLLLTGGDARVVSRGLRVPHAIWPDMVYAGLETCFPMTAAERAGRLSGAPPPPPAPPLEKVRASLAFSMLL.

Residue 6 to 13 coordinates ATP; that stretch reads DIGNTLSK. Residues Y92 and 99-102 contribute to the substrate site; that span reads GVDR. The Proton acceptor role is filled by D101. D120 is a K(+) binding site. S123 provides a ligand contact to ATP. T177 provides a ligand contact to substrate.

It belongs to the type III pantothenate kinase family. Homodimer. Requires NH4(+) as cofactor. K(+) serves as cofactor.

Its subcellular location is the cytoplasm. It catalyses the reaction (R)-pantothenate + ATP = (R)-4'-phosphopantothenate + ADP + H(+). It participates in cofactor biosynthesis; coenzyme A biosynthesis; CoA from (R)-pantothenate: step 1/5. In terms of biological role, catalyzes the phosphorylation of pantothenate (Pan), the first step in CoA biosynthesis. The polypeptide is Type III pantothenate kinase (Chromohalobacter salexigens (strain ATCC BAA-138 / DSM 3043 / CIP 106854 / NCIMB 13768 / 1H11)).